The chain runs to 84 residues: MSCKKSARQSLYVSLCLFYILVFAAATEVDFYSPECHSHTYEIVLNSFSSIWLLINLFLLLCSFAIFLKYWCYKTFASETVKGY.

The first 26 residues, 1 to 26 (MSCKKSARQSLYVSLCLFYILVFAAA), serve as a signal peptide directing secretion. Residues 27 to 47 (TEVDFYSPECHSHTYEIVLNS) lie on the Virion surface side of the membrane. The helical transmembrane segment at 48-68 (FSSIWLLINLFLLLCSFAIFL) threads the bilayer. The Intravirion segment spans residues 69 to 84 (KYWCYKTFASETVKGY).

The protein belongs to the herpesviridae glycoprotein N family. Interacts (via N-terminus) with gM (via N-terminus). The gM-gN heterodimer forms the gCII complex.

It localises to the virion membrane. Its subcellular location is the host membrane. The protein resides in the host Golgi apparatus. It is found in the host trans-Golgi network. Envelope glycoprotein necessary for proper maturation of gM and modulation of its membrane fusion activity. Also plays a critical role in virion morphogenesis. This Homo sapiens (Human) protein is Envelope glycoprotein N.